The chain runs to 350 residues: Biotin synthase (350 aa).

Residues 38 to 256 form the Radical SAM core domain; the sequence is NYVQVSTLLS…IAIARIMMPQ (219 aa). 3 residues coordinate [4Fe-4S] cluster: C53, C57, and C60. Residues C97, C128, C188, and R260 each contribute to the [2Fe-2S] cluster site.

The protein belongs to the radical SAM superfamily. Biotin synthase family. In terms of assembly, homodimer. Requires [4Fe-4S] cluster as cofactor. It depends on [2Fe-2S] cluster as a cofactor.

The enzyme catalyses (4R,5S)-dethiobiotin + (sulfur carrier)-SH + 2 reduced [2Fe-2S]-[ferredoxin] + 2 S-adenosyl-L-methionine = (sulfur carrier)-H + biotin + 2 5'-deoxyadenosine + 2 L-methionine + 2 oxidized [2Fe-2S]-[ferredoxin]. It participates in cofactor biosynthesis; biotin biosynthesis; biotin from 7,8-diaminononanoate: step 2/2. In terms of biological role, catalyzes the conversion of dethiobiotin (DTB) to biotin by the insertion of a sulfur atom into dethiobiotin via a radical-based mechanism. The polypeptide is Biotin synthase (Vibrio campbellii (strain ATCC BAA-1116)).